Here is a 172-residue protein sequence, read N- to C-terminus: MDLKQYVSEVQDWPKEGVDFKDITTIMDNGEAYGYATDQIVEFAREKEVDIVVGPEARGFIIGCPVAYSMGIGFAPVRKEGKLPREVIRYEYDLEYGTNVLTMHKDAIKPGQRVLITDDLLATGGTIEATIKLVEELGGIVVGIAFIIELKYLHGIDKLDGYDVLSLISYDE.

It belongs to the purine/pyrimidine phosphoribosyltransferase family. As to quaternary structure, homodimer.

It localises to the cytoplasm. It catalyses the reaction AMP + diphosphate = 5-phospho-alpha-D-ribose 1-diphosphate + adenine. The protein operates within purine metabolism; AMP biosynthesis via salvage pathway; AMP from adenine: step 1/1. Its function is as follows. Catalyzes a salvage reaction resulting in the formation of AMP, that is energically less costly than de novo synthesis. This chain is Adenine phosphoribosyltransferase, found in Staphylococcus carnosus (strain TM300).